The primary structure comprises 345 residues: NADH-ubiquinone oxidoreductase chain 2 (345 aa).

The next 10 helical transmembrane spans lie at 3–23 (PYIL…TFAS), 25–45 (NWLL…PLMA), 59–79 (YFIT…INAW), 95–115 (ALMT…FWLP), 148–168 (LMPE…GWGG), 177–196 (IMAY…MHFM), 201–223 (IINL…TLNS), 236–256 (FPAL…LPPL), 273–293 (NLAL…YFYL), and 322–342 (FILP…PSII).

This sequence belongs to the complex I subunit 2 family.

Its subcellular location is the mitochondrion inner membrane. It carries out the reaction a ubiquinone + NADH + 5 H(+)(in) = a ubiquinol + NAD(+) + 4 H(+)(out). Its function is as follows. Core subunit of the mitochondrial membrane respiratory chain NADH dehydrogenase (Complex I) that is believed to belong to the minimal assembly required for catalysis. Complex I functions in the transfer of electrons from NADH to the respiratory chain. The immediate electron acceptor for the enzyme is believed to be ubiquinone. The protein is NADH-ubiquinone oxidoreductase chain 2 (MT-ND2) of Polypterus ornatipinnis (Ornate bichir).